The chain runs to 328 residues: Glycerophosphodiester phosphodiesterase GDPD4 (328 aa).

A helical membrane pass occupies residues 35–55 (TILFAVIFLAIFPPLYFHFKL). Residues 73 to 312 (PLVCAHGGDS…SDPSMFQGLM (240 aa)) enclose the GP-PDE domain.

Belongs to the glycerophosphoryl diester phosphodiesterase family. As to expression, expressed in rosette and cauline leaves.

Its subcellular location is the membrane. It carries out the reaction a sn-glycero-3-phosphodiester + H2O = an alcohol + sn-glycerol 3-phosphate + H(+). The polypeptide is Glycerophosphodiester phosphodiesterase GDPD4 (Arabidopsis thaliana (Mouse-ear cress)).